The primary structure comprises 128 residues: Kinetoplast-associated protein 4 (128 aa).

Positions 1-10 are excised as a propeptide; it reads MLRFVPRRLA. The interval 60-87 is disordered; it reads AHPGFKRKEKEPKELKAAKAAKTSTPRA. Residues 65 to 76 are compositionally biased toward basic and acidic residues; sequence KRKEKEPKELKA.

Belongs to the KAP family. In terms of assembly, associates with the kinetoplast DNA network.

It localises to the mitochondrion matrix. The protein localises to the kinetoplast. Histone H1-like DNA-binding protein involved in the organization and segregation of kinetoplast DNA (kDNA). The mitochondrial DNA of kinetoplastid protozoa consists of about 5,000 minicircles and 20 to 30 maxicircles. These circular DNAs are held together by catenation into a highly organized compact disk structure referred to as a kinetoplast DNA (kDNA) network. Binds preferentially to a specific fragment of minicircle DNA and is able to compact kDNA networks through DNA charge neutralization and condensation. The protein is Kinetoplast-associated protein 4 (KAP4) of Crithidia fasciculata.